Consider the following 149-residue polypeptide: Transcription antitermination protein NusB (149 aa).

This sequence belongs to the NusB family.

Involved in transcription antitermination. Required for transcription of ribosomal RNA (rRNA) genes. Binds specifically to the boxA antiterminator sequence of the ribosomal RNA (rrn) operons. In Caulobacter vibrioides (strain ATCC 19089 / CIP 103742 / CB 15) (Caulobacter crescentus), this protein is Transcription antitermination protein NusB.